The following is a 1391-amino-acid chain: Periaxin (1391 aa).

Ser-7 bears the Phosphoserine mark. Positions 16–99 constitute a PDZ domain; the sequence is LVEIIVETEA…YKVSFCLKRT (84 aa). The Nuclear export signal motif lies at 70-84; sequence VFFENFKYEDALRLL. The short motif at 118–196 is the Nuclear localization signal element; that stretch reads KGPRAKVAKL…RLQLPRLRVR (79 aa). Phosphoserine is present on Ser-243. 12 repeat units span residues 432 to 436, 440 to 444, 448 to 452, 456 to 460, 464 to 468, 469 to 473, 474 to 478, 482 to 486, 487 to 491, 495 to 499, 500 to 504, and 508 to 512. The tract at residues 432–719 is 45 X 5 AA approximate tandem repeats of [LVMGIED]-[PQSKHARMI]-[EDKLVTR]-[LIVMAP]-[AQKHRPEVSD]; that may have a tripeptide spacer of [LVIDEA]-[PMSVI]-[KEATDQ]; it reads GPEVKAPTGP…MQVSQVPEVQ (288 aa). One copy of the 13; approximate repeat lies at 513–517; the sequence is WPEMA. Repeat copies occupy residues 521-525, 526-530, 534-538, 539-543, 547-551, 552-556, 560-564, 565-569, 573-577, 578-582, 583-587, 591-595, 596-600, 601-605, 609-613, 614-618, 619-623, 627-631, 632-636, 637-641, 645-649, 650-654, 655-659, 663-667, 671-675, 676-680, 684-688, 689-693, 697-701, 702-706, 707-711, and 715-719. Phosphoserine occurs at positions 848, 979, 1028, 1279, 1283, 1285, 1293, 1331, and 1337. The interval 1267 to 1366 is disordered; sequence LPRVGFSQSE…DREEGGFRVR (100 aa). A compositionally biased stretch (low complexity) spans 1275–1285; the sequence is SESVSGEGSPS. Over residues 1354-1363 the composition is skewed to basic and acidic residues; it reads GSRDREEGGF. Ser-1369 is subject to Phosphoserine.

It belongs to the periaxin family. Homodimer (via PDZ domain). Interacts with SCN10A. Found in a complex with SCN10A. Interacts with DRP2. Identified in a dystroglycan complex that contains at least PRX, DRP2, UTRN, DMD and DAG1. Detected in a complex composed of at least EZR, AHNAK, PPL and PRX. Identified in a complex with EZR, AHNAK, BFSP1, BFSP2, ANK2, PLEC, VIM and spectrin. Detected in myelinating Schwann cells in intramuscular nerves in triangularis sterni. Detected in sciatic nerve. Detected in eye lens fiber cells. Isoform 1 is detected in myelinating Schwann cells in sciatic nerve. Isoform 2 is detected in myelinating Schwann cells in sciatic nerve (at protein level). Detected in sciatic nerve.

Its subcellular location is the cell membrane. It localises to the cell junction. It is found in the nucleus. The protein resides in the cytoplasm. In terms of biological role, scaffolding protein that functions as part of a dystroglycan complex in Schwann cells, and as part of EZR and AHNAK-containing complexes in eye lens fiber cells. Required for the maintenance of the peripheral myelin sheath that is essential for normal transmission of nerve impulses and normal perception of sensory stimuli. Required for normal transport of MBP mRNA from the perinuclear to the paranodal regions. Required for normal remyelination after nerve injury. Required for normal elongation of Schwann cells and normal length of the internodes between the nodes of Ranvier. The demyelinated nodes of Ranvier permit saltatory transmission of nerve impulses; shorter internodes cause slower transmission of nerve impulses. Required for the formation of appositions between the abaxonal surface of the myelin sheath and the Schwann cell plasma membrane; the Schwann cell cytoplasm is restricted to regions between these appositions. Required for the formation of Cajal bands and of Schmidt-Lanterman incisures that correspond to short, cytoplasm-filled regions on myelinated nerves. Recruits DRP2 to the Schwann cell plasma membrane. Required for normal protein composition of the eye lens fiber cell plasma membrane and normal eye lens fiber cell morphology. This is Periaxin (Prx) from Mus musculus (Mouse).